Reading from the N-terminus, the 365-residue chain is N5-carboxyaminoimidazole ribonucleotide synthase (365 aa).

Residues arginine 93, lysine 132, 137-143 (GYDGKGQ), 168-171 (EEFV), glutamate 176, histidine 199, and 249-250 (NE) contribute to the ATP site. The ATP-grasp domain occupies 97-279 (KLFLKKHGFP…QFENLLRAIT (183 aa)).

It belongs to the PurK/PurT family. In terms of assembly, homodimer.

It carries out the reaction 5-amino-1-(5-phospho-beta-D-ribosyl)imidazole + hydrogencarbonate + ATP = 5-carboxyamino-1-(5-phospho-D-ribosyl)imidazole + ADP + phosphate + 2 H(+). It participates in purine metabolism; IMP biosynthesis via de novo pathway; 5-amino-1-(5-phospho-D-ribosyl)imidazole-4-carboxylate from 5-amino-1-(5-phospho-D-ribosyl)imidazole (N5-CAIR route): step 1/2. Catalyzes the ATP-dependent conversion of 5-aminoimidazole ribonucleotide (AIR) and HCO(3)(-) to N5-carboxyaminoimidazole ribonucleotide (N5-CAIR). This Aquifex aeolicus (strain VF5) protein is N5-carboxyaminoimidazole ribonucleotide synthase.